We begin with the raw amino-acid sequence, 294 residues long: Probable 2-(5''-triphosphoribosyl)-3'-dephosphocoenzyme-A synthase (294 aa).

The protein belongs to the CitG/MdcB family.

It carries out the reaction 3'-dephospho-CoA + ATP = 2'-(5''-triphospho-alpha-D-ribosyl)-3'-dephospho-CoA + adenine. The chain is Probable 2-(5''-triphosphoribosyl)-3'-dephosphocoenzyme-A synthase from Streptococcus equi subsp. equi (strain 4047).